The sequence spans 664 residues: DNA ligase (664 aa).

Residues 31–35 (DYEFD), 80–81 (SL), and glutamate 110 contribute to the NAD(+) site. Catalysis depends on lysine 112, which acts as the N6-AMP-lysine intermediate. Residues arginine 133 and glutamate 169 each contribute to the NAD(+) site. A BRCT 1 domain is found at 237–257 (LEKARKWGFKVPAESELKDSI). NAD(+) is bound by residues lysine 284 and lysine 308. Zn(2+) is bound by residues cysteine 402, cysteine 405, cysteine 420, and cysteine 426. The BRCT 2 domain occupies 586-664 (NQTNILEGNT…SEEDFLKMLE (79 aa)).

This sequence belongs to the NAD-dependent DNA ligase family. LigA subfamily. Mg(2+) serves as cofactor. It depends on Mn(2+) as a cofactor.

The enzyme catalyses NAD(+) + (deoxyribonucleotide)n-3'-hydroxyl + 5'-phospho-(deoxyribonucleotide)m = (deoxyribonucleotide)n+m + AMP + beta-nicotinamide D-nucleotide.. Functionally, DNA ligase that catalyzes the formation of phosphodiester linkages between 5'-phosphoryl and 3'-hydroxyl groups in double-stranded DNA using NAD as a coenzyme and as the energy source for the reaction. It is essential for DNA replication and repair of damaged DNA. The polypeptide is DNA ligase (Christiangramia forsetii (strain DSM 17595 / CGMCC 1.15422 / KT0803) (Gramella forsetii)).